The chain runs to 491 residues: GTPase Der (491 aa).

2 EngA-type G domains span residues 54-217 and 229-402; these read PVLA…PEYS and RRIA…ESWD. GTP is bound by residues 60–67, 107–111, 169–172, 235–242, 282–286, and 347–350; these read GRPNVGKS, DTGGW, NKVD, DTAGI, and NKWD. The region spanning 403–485 is the KH-like domain; sequence RRIPTGRLNA…PIEVNMRVRE (83 aa).

The protein belongs to the TRAFAC class TrmE-Era-EngA-EngB-Septin-like GTPase superfamily. EngA (Der) GTPase family. As to quaternary structure, associates with the 50S ribosomal subunit.

Functionally, GTPase that plays an essential role in the late steps of ribosome biogenesis. This Paenarthrobacter aurescens (strain TC1) protein is GTPase Der.